Consider the following 339-residue polypeptide: D-glycero-alpha-D-manno-heptose 7-phosphate kinase (339 aa).

Residue G17 to D20 participates in substrate binding. ATP contacts are provided by residues S57 and G110–S116. Mg(2+)-binding residues include S116 and E148. D160 serves as the catalytic Proton acceptor.

The protein belongs to the GHMP kinase family.

It catalyses the reaction D-glycero-alpha-D-manno-heptose 7-phosphate + ATP = D-glycero-alpha-D-manno-heptose 1,7-bisphosphate + ADP + H(+). It participates in nucleotide-sugar biosynthesis; GDP-D-glycero-alpha-D-manno-heptose biosynthesis; GDP-D-glycero-alpha-D-manno-heptose from D-glycero-alpha-D-manno-heptose 7-phosphate: step 1/3. It functions in the pathway capsule biogenesis; capsule polysaccharide biosynthesis. Its function is as follows. Catalyzes the phosphorylation of D-glycero-alpha-D-manno-heptose 7-phosphate at the C-1 position to form D-glycero-alpha-D-manno-heptose 1,7-bisphosphate. The chain is D-glycero-alpha-D-manno-heptose 7-phosphate kinase from Campylobacter jejuni subsp. jejuni serotype O:2 (strain ATCC 700819 / NCTC 11168).